We begin with the raw amino-acid sequence, 493 residues long: Probable cytosol aminopeptidase (493 aa).

Residues Lys-257 and Asp-262 each coordinate Mn(2+). Lys-269 is an active-site residue. Mn(2+) is bound by residues Asp-280, Asp-339, and Glu-341. Arg-343 is a catalytic residue.

Belongs to the peptidase M17 family. Requires Mn(2+) as cofactor.

The protein resides in the cytoplasm. The catalysed reaction is Release of an N-terminal amino acid, Xaa-|-Yaa-, in which Xaa is preferably Leu, but may be other amino acids including Pro although not Arg or Lys, and Yaa may be Pro. Amino acid amides and methyl esters are also readily hydrolyzed, but rates on arylamides are exceedingly low.. It carries out the reaction Release of an N-terminal amino acid, preferentially leucine, but not glutamic or aspartic acids.. Presumably involved in the processing and regular turnover of intracellular proteins. Catalyzes the removal of unsubstituted N-terminal amino acids from various peptides. The protein is Probable cytosol aminopeptidase (pepA) of Aquifex aeolicus (strain VF5).